A 326-amino-acid chain; its full sequence is Malate dehydrogenase (326 aa).

11–17 (GAAGQIG) is a binding site for NAD(+). Residues R92 and R98 each coordinate substrate. NAD(+) is bound by residues N105, Q112, and 129 to 131 (VGN). Substrate-binding residues include N131 and R162. H187 acts as the Proton acceptor in catalysis.

This sequence belongs to the LDH/MDH superfamily. MDH type 2 family.

It catalyses the reaction (S)-malate + NAD(+) = oxaloacetate + NADH + H(+). Functionally, catalyzes the reversible oxidation of malate to oxaloacetate. This chain is Malate dehydrogenase, found in Leptospira interrogans serogroup Icterohaemorrhagiae serovar Lai (strain 56601).